Consider the following 34-residue polypeptide: MEEKPKGALAVILVLTLTILVFWLGVYAVFFARG.

Residue Met1 is modified to N-formylmethionine. A helical transmembrane segment spans residues 4 to 34 (KPKGALAVILVLTLTILVFWLGVYAVFFARG).

Its subcellular location is the cell membrane. The enzyme catalyses 4 Fe(II)-[cytochrome c] + O2 + 8 H(+)(in) = 4 Fe(III)-[cytochrome c] + 2 H2O + 4 H(+)(out). This chain is Cytochrome c oxidase polypeptide 2A (cbaD), found in Thermus thermophilus (strain ATCC 27634 / DSM 579 / HB8).